The primary structure comprises 707 residues: Zinc finger CCHC domain-containing protein 8 (707 aa).

An N-acetylalanine modification is found at Ala-2. The tract at residues 16–44 (FDHPEESIPKPVHTRFKDDDGDEEDENGV) is disordered. Residues 34–43 (DDGDEEDENG) are compositionally biased toward acidic residues. Residues 45–80 (GDAELRERLRQCEETIEQLRAENQELKRKLNILTRP) are a coiled coil. The CCHC-type zinc finger occupies 227 to 244 (PHCFNCGSEEHQMKDCPM). 2 RBM7 binding regions span residues 286–299 (FKPGVISEELQDAL) and 309–324 (FIYRMRQLGYPPGWLK). The residue at position 342 (Thr-342) is a Phosphothreonine. 3 disordered regions span residues 409–518 (APGV…LTLE), 531–607 (LEQA…TSLC), and 641–660 (QKLFPADTSPSTATKIHSPI). Residue Lys-413 forms a Glycyl lysine isopeptide (Lys-Gly) (interchain with G-Cter in SUMO2) linkage. Residues 456–465 (SQSSESFQFQ) are compositionally biased toward low complexity. Positions 466-496 (PPLPPDTPPLPRGTPPPVFTPPLPKGTPPLT) are enriched in pro residues. Thr-472, Thr-479, and Thr-485 each carry phosphothreonine. Phosphothreonine; by GSK3 is present on Thr-492. Residues 516 to 539 (TLEELEEQQRRIWAALEQAESVNS) adopt a coiled-coil conformation. Residues 549–559 (LTGNSVASSPC) are compositionally biased toward polar residues. Residue Thr-577 is modified to Phosphothreonine. A Phosphoserine modification is found at Ser-598. Over residues 598-607 (SPDSEVTSLC) the composition is skewed to polar residues. Thr-648 is subject to Phosphothreonine. Phosphoserine is present on residues Ser-649, Ser-658, and Ser-695. The tract at residues 659–707 (PIPDMSKFATGITPFEFENMAESTGMYLRIRSLLKNSPRNQQKNKKASE) is MTREX binding.

The protein belongs to the ZCCHC8 family. In terms of assembly, component of a nuclear TRAMP-like complex, an ATP-dependent exosome regulatory complex consisting of a helicase (MTREX), an oligadenylate polymerase (TENT4B or TENT4A), and a substrate specific RNA-binding factor (ZCCHC7 or ZCCHC8). Several TRAMP-like complexes exist with specific compositions and are associated with nuclear, or nucleolar RNA exosomes. Identified in the spliceosome C complex. Component of the nuclear exosome targeting (NEXT) complex composed of MTREX, ZCCHC8, and RBM7 that directs a subset of non-coding short-lived RNAs for exosomal degradation. Interacts with proteins involved in RNA processing and degradation such as MTREX and RBM7; interaction with MTREX enhances MTREX RNA helicase activity and bridges between RBM7 and MTREX. Interacts with TERC, the telomerase RNA component. Post-translationally, phosphorylation at Thr-492 by GSK3 is triggered in cells entering mitosis; this phosphorylation is greatly enhanced by nocodazole treatment, but reduced by lithium.

It is found in the nucleus. The protein localises to the nucleoplasm. Its function is as follows. Scaffolding subunit of the trimeric nuclear exosome targeting (NEXT) complex that is involved in the surveillance and turnover of aberrant transcripts and non-coding RNAs. NEXT functions as an RNA exosome cofactor that directs a subset of non-coding short-lived RNAs for exosomal degradation. May be involved in pre-mRNA splicing. It is required for 3'-end maturation of telomerase RNA component (TERC), TERC 3'-end targeting to the nuclear RNA exosome, and for telomerase function. The sequence is that of Zinc finger CCHC domain-containing protein 8 (ZCCHC8) from Homo sapiens (Human).